The chain runs to 186 residues: Large ribosomal subunit protein bL9 (186 aa).

The disordered stretch occupies residues 153-186; the sequence is ELRQVKSQSQKSQQQEAKQNEVGEATDSDKADQK. Over residues 157-169 the composition is skewed to low complexity; it reads VKSQSQKSQQQEA.

This sequence belongs to the bacterial ribosomal protein bL9 family.

Binds to the 23S rRNA. The chain is Large ribosomal subunit protein bL9 from Wolbachia sp. subsp. Brugia malayi (strain TRS).